The sequence spans 598 residues: Mitochondrial distribution and morphology protein 30 (598 aa).

The F-box domain occupies Ser13–Arg59.

As to quaternary structure, interacts with SKP1. Component of the probable SCF(MDM30) complex containing CDC53, SKP1, RBX1 and MDM30. Interacts with SKP1 and FZO1.

It localises to the cytoplasm. The protein localises to the mitochondrion. It participates in protein modification; protein ubiquitination. Substrate recognition component of a SCF (SKP1-CUL1-F-box protein) E3 ubiquitin-protein ligase complex which mediates the ubiquitination and subsequent proteasomal degradation of target proteins. Probably recognizes and binds to phosphorylated target proteins. Recognizes FZO1 and regulates the amount of FZO1. Regulatory factor for the mitochondrial fusion machinery. Required for mitochondrial DNA maintenance. The sequence is that of Mitochondrial distribution and morphology protein 30 (MDM30) from Saccharomyces cerevisiae (strain ATCC 204508 / S288c) (Baker's yeast).